The primary structure comprises 148 residues: Small ribosomal subunit protein bS6 (148 aa).

A disordered region spans residues 96 to 148 (HEEGQSAMLTRRDDRRERDGDDRPRRREGGFDRGDRGDRGPRRPRDNEAGEGA).

It belongs to the bacterial ribosomal protein bS6 family.

Functionally, binds together with bS18 to 16S ribosomal RNA. The polypeptide is Small ribosomal subunit protein bS6 (Brucella abortus biovar 1 (strain 9-941)).